A 312-amino-acid chain; its full sequence is tRNA-dihydrouridine(16) synthase (312 aa).

FMN contacts are provided by residues 7–9 (PME) and Q68. Residue C98 is the Proton donor of the active site. FMN-binding positions include K139, 200-202 (NGE), and 224-225 (GR).

Belongs to the Dus family. DusC subfamily. It depends on FMN as a cofactor.

The enzyme catalyses 5,6-dihydrouridine(16) in tRNA + NADP(+) = uridine(16) in tRNA + NADPH + H(+). It catalyses the reaction 5,6-dihydrouridine(16) in tRNA + NAD(+) = uridine(16) in tRNA + NADH + H(+). In terms of biological role, catalyzes the synthesis of 5,6-dihydrouridine (D), a modified base found in the D-loop of most tRNAs, via the reduction of the C5-C6 double bond in target uridines. Specifically modifies U16 in tRNAs. In Yersinia pestis, this protein is tRNA-dihydrouridine(16) synthase.